A 252-amino-acid chain; its full sequence is 5-oxoprolinase subunit A (252 aa).

The protein belongs to the LamB/PxpA family. As to quaternary structure, forms a complex composed of PxpA, PxpB and PxpC.

The catalysed reaction is 5-oxo-L-proline + ATP + 2 H2O = L-glutamate + ADP + phosphate + H(+). Its function is as follows. Catalyzes the cleavage of 5-oxoproline to form L-glutamate coupled to the hydrolysis of ATP to ADP and inorganic phosphate. The polypeptide is 5-oxoprolinase subunit A (Mycobacterium leprae (strain Br4923)).